Consider the following 217-residue polypeptide: Adenylate kinase (217 aa).

10 to 15 (GAGKGT) contacts ATP. The NMP stretch occupies residues 30 to 59 (STGDIFRSNVSQGTPLGVQAKRYMDAGELV). AMP contacts are provided by residues Thr31, Arg36, 57–59 (ELV), 85–88 (GFPR), and Gln92. Positions 126 to 163 (GRRTCRGCGKVWHVEFDAPSQEGRCDRCGAELFQRDDD) are LID. Arg127 is an ATP binding site. Zn(2+) contacts are provided by Cys130, Cys133, Cys150, and Cys153. AMP-binding residues include Arg160 and Arg171. Residue Gly199 coordinates ATP.

This sequence belongs to the adenylate kinase family. As to quaternary structure, monomer.

It localises to the cytoplasm. The enzyme catalyses AMP + ATP = 2 ADP. It participates in purine metabolism; AMP biosynthesis via salvage pathway; AMP from ADP: step 1/1. In terms of biological role, catalyzes the reversible transfer of the terminal phosphate group between ATP and AMP. Plays an important role in cellular energy homeostasis and in adenine nucleotide metabolism. The polypeptide is Adenylate kinase (Salinispora tropica (strain ATCC BAA-916 / DSM 44818 / JCM 13857 / NBRC 105044 / CNB-440)).